A 130-amino-acid polypeptide reads, in one-letter code: MIGEWNYGTGRRKSSVARVFIKKGTGKIIVNGKTVEEYFGRQTSIMICKQPLFLTNNAEAFDIKVNVHGGGESGQAGAVRHGVTRALIDYDAALKPELSNAGFVTRDAREVERKKVGLHGARRRKQFSKR.

It belongs to the universal ribosomal protein uS9 family.

The polypeptide is Small ribosomal subunit protein uS9 (Leptothrix cholodnii (strain ATCC 51168 / LMG 8142 / SP-6) (Leptothrix discophora (strain SP-6))).